A 411-amino-acid polypeptide reads, in one-letter code: Phospholipase A1-II 6 (411 aa).

The active-site Acyl-ester intermediate is Ser-226. Residues Ser-226, Asp-296, and His-334 each act as charge relay system in the active site.

Belongs to the AB hydrolase superfamily. Lipase family.

The protein localises to the cytoplasm. Its function is as follows. Acylhydrolase that catalyzes the hydrolysis of phospholipids at the sn-1 position. This is Phospholipase A1-II 6 from Oryza sativa subsp. japonica (Rice).